The following is a 215-amino-acid chain: Probable GTP-binding protein EngB (215 aa).

The 175-residue stretch at 30–204 (EGLEVAFAGR…QMVLAQWLGL (175 aa)) folds into the EngB-type G domain. Residues 38-45 (GRSNAGKS), 64-68 (GRTQL), 82-85 (DLPG), 149-152 (TKAD), and 182-185 (LFSA) each bind GTP. Ser-45 and Thr-66 together coordinate Mg(2+).

It belongs to the TRAFAC class TrmE-Era-EngA-EngB-Septin-like GTPase superfamily. EngB GTPase family. Mg(2+) serves as cofactor.

Functionally, necessary for normal cell division and for the maintenance of normal septation. This Pseudomonas aeruginosa (strain ATCC 15692 / DSM 22644 / CIP 104116 / JCM 14847 / LMG 12228 / 1C / PRS 101 / PAO1) protein is Probable GTP-binding protein EngB.